Consider the following 403-residue polypeptide: Dual-specificity RNA methyltransferase RlmN (403 aa).

The disordered stretch occupies residues 1–25; that stretch reads MTKIPMQPADSTPATFHPNAPTKTN. Glu-112 acts as the Proton acceptor in catalysis. The Radical SAM core domain occupies 123–364; it reads VNGRKTLCIS…VCTIRQTRGD (242 aa). Cys-130 and Cys-370 form a disulfide bridge. The [4Fe-4S] cluster site is built by Cys-137, Cys-141, and Cys-144. Residues 193-194, Ser-225, 247-249, and Asn-327 each bind S-adenosyl-L-methionine; these read GE and SLH. Catalysis depends on Cys-370, which acts as the S-methylcysteine intermediate.

The protein belongs to the radical SAM superfamily. RlmN family. The cofactor is [4Fe-4S] cluster.

Its subcellular location is the cytoplasm. It carries out the reaction adenosine(2503) in 23S rRNA + 2 reduced [2Fe-2S]-[ferredoxin] + 2 S-adenosyl-L-methionine = 2-methyladenosine(2503) in 23S rRNA + 5'-deoxyadenosine + L-methionine + 2 oxidized [2Fe-2S]-[ferredoxin] + S-adenosyl-L-homocysteine. It catalyses the reaction adenosine(37) in tRNA + 2 reduced [2Fe-2S]-[ferredoxin] + 2 S-adenosyl-L-methionine = 2-methyladenosine(37) in tRNA + 5'-deoxyadenosine + L-methionine + 2 oxidized [2Fe-2S]-[ferredoxin] + S-adenosyl-L-homocysteine. In terms of biological role, specifically methylates position 2 of adenine 2503 in 23S rRNA and position 2 of adenine 37 in tRNAs. m2A2503 modification seems to play a crucial role in the proofreading step occurring at the peptidyl transferase center and thus would serve to optimize ribosomal fidelity. In Psychrobacter sp. (strain PRwf-1), this protein is Dual-specificity RNA methyltransferase RlmN.